Reading from the N-terminus, the 530-residue chain is MSVDTYTETTKIDKLLKKPTSHFQLSTTQLYNKILDNNEGVLTELGAVNASTGKYTGRSPKDKFFVSEPSYRDNIDWGEINQPIDEETFLKLYHKVLDYLDKKDELYVFKGYAGSDKDTMLKLTVINELAWHNLFAKNMFIRPESKEEATKIKPNFTIVSAPHFKADPEVDGTKSETFVIISFKHKVILIGGTEYAGEMKKGIFSVMNYLLPMQDIMSMHCSANVGEKGDVALFFGLSGTGKTTLSADPHRKLIGDDEHGWNKNGVFNIEGGCYAKAINLSKEKEPQIFDAIKYGAILENTVVAEDGSVDFEDNRYTENTRAAYPINHIDNIVVPSKAAHPNTIIFLTADAFGVIPPISKLNKDQAMYHFLSGFTSKLAGTERGVTEPEPSFSTCFGAPFFPLHPTVYADLLGELIDLHDVDVYLVNTGWTGGKYGVGRRISLHYTRQMVNQAISGKLKNAEYTKDSTFGLSIPVEIEDVPKTILNPINAWSDKEKYKAQAEDLIQRFEKNFEKFGEKVEHIAEKGSFNK.

Residues Arg58, Tyr195, and Lys201 each contribute to the substrate site. Residues Lys201, His220, and 236 to 244 (GLSGTGKTT) contribute to the ATP site. Lys201 and His220 together coordinate Mn(2+). Residue Asp257 participates in Mn(2+) binding. Residues Glu285, Arg321, 440–441 (RI), and Thr446 contribute to the ATP site. Arg321 contributes to the substrate binding site.

It belongs to the phosphoenolpyruvate carboxykinase (ATP) family. Mn(2+) is required as a cofactor.

It localises to the cytoplasm. It carries out the reaction oxaloacetate + ATP = phosphoenolpyruvate + ADP + CO2. It functions in the pathway carbohydrate biosynthesis; gluconeogenesis. Functionally, involved in the gluconeogenesis. Catalyzes the conversion of oxaloacetate (OAA) to phosphoenolpyruvate (PEP) through direct phosphoryl transfer between the nucleoside triphosphate and OAA. The chain is Phosphoenolpyruvate carboxykinase (ATP) from Staphylococcus aureus (strain Mu3 / ATCC 700698).